We begin with the raw amino-acid sequence, 631 residues long: MPTTFQEIPRERPVTPLLDRADTPAGLRRLAEADLETLADELRQELLYTVGQTGGHFGAGLGVIELTIALHYVFDTPDDRLVWDVGHQAYPHKILTGRRNRMLSLRQKDGIAAFPRRSESEYDTFGVGHSSTSISAALGMAIAARLQNSARKSIAVIGDGALTAGMAFEALNHAQEVNADMLVILNDNDMSISRNVGGLSNYLAKILSSRTYASMREGSKKVLSRLPGAWEIARRTEEYAKGMLVPGTLFEELGWNYIGPIDGHDLPTMIATLRNMRDLKGPQFLHVVTKKGKGFAPAEVDPIGYHAITKLEPADKPAAPKKVSGPKYSAVFGQWLCDMAAADNRLVGITPAMKEGSDLVDFSERYPQRYFDVAIAEQHAVTLAAGMACEGSKPVVAIYSTFLQRAYDQLIHDVAVQNLDVLFAIDRAGLVGEDGPTHAGSYDLSYLRCIPGMLVMTPSDENELRKMLSTGHLYNGPAAVRYPRGTGPNAPISGDLQPLEIGKGVVRRQGEKIALLVFGVQLAEAMQVAEQINATVVDMRFVKPLDEALVLELAGSHELLVTIEENAIMGGAGAAVGEFLASQAVLKPLLHLGLPDIYVEHAKPAQMLAECGLDAAGIEASVKARMAKLGL.

Thiamine diphosphate is bound by residues His87 and 128–130; that span reads GHS. Asp159 is a binding site for Mg(2+). Thiamine diphosphate contacts are provided by residues 160 to 161, Asn188, Phe295, and Glu377; that span reads GA. Asn188 contacts Mg(2+).

The protein belongs to the transketolase family. DXPS subfamily. Homodimer. Mg(2+) serves as cofactor. It depends on thiamine diphosphate as a cofactor.

The catalysed reaction is D-glyceraldehyde 3-phosphate + pyruvate + H(+) = 1-deoxy-D-xylulose 5-phosphate + CO2. It functions in the pathway metabolic intermediate biosynthesis; 1-deoxy-D-xylulose 5-phosphate biosynthesis; 1-deoxy-D-xylulose 5-phosphate from D-glyceraldehyde 3-phosphate and pyruvate: step 1/1. Catalyzes the acyloin condensation reaction between C atoms 2 and 3 of pyruvate and glyceraldehyde 3-phosphate to yield 1-deoxy-D-xylulose-5-phosphate (DXP). The protein is 1-deoxy-D-xylulose-5-phosphate synthase of Pseudomonas putida (strain GB-1).